Reading from the N-terminus, the 44-residue chain is Alpha-amylase inhibitor magnificamide (44 aa).

3 disulfide bridges follow: cysteine 6–cysteine 38, cysteine 16–cysteine 33, and cysteine 20–cysteine 39. Positions 7–10 are inhibitory motif; that stretch reads YIYH.

This sequence belongs to the sea anemone alpha-amylase inhibitor family.

The protein localises to the secreted. Functionally, mammalian alpha-amylase (AMY2A) inhibitor. The recombinant peptide inhibits porcine pancreatic (Ki=0.17 nM) and human saliva alpha-amylases (Ki=7.7 nM). It does not show antimicrobial (tested on fungi and bacteria) or channel modulating activities (tested on 18 voltage-gated sodium and potassium channles). This is Alpha-amylase inhibitor magnificamide from Heteractis magnifica (Magnificent sea anemone).